The chain runs to 231 residues: Ribonuclease P protein component 3 (231 aa).

The protein belongs to the eukaryotic/archaeal RNase P protein component 3 family. Consists of a catalytic RNA component and at least 4-5 protein subunits.

It localises to the cytoplasm. It carries out the reaction Endonucleolytic cleavage of RNA, removing 5'-extranucleotides from tRNA precursor.. Its function is as follows. Part of ribonuclease P, a protein complex that generates mature tRNA molecules by cleaving their 5'-ends. This Methanococcus vannielii (strain ATCC 35089 / DSM 1224 / JCM 13029 / OCM 148 / SB) protein is Ribonuclease P protein component 3.